We begin with the raw amino-acid sequence, 184 residues long: Ribosome-recycling factor (184 aa).

It belongs to the RRF family.

Its subcellular location is the cytoplasm. Responsible for the release of ribosomes from messenger RNA at the termination of protein biosynthesis. May increase the efficiency of translation by recycling ribosomes from one round of translation to another. This chain is Ribosome-recycling factor, found in Thermoanaerobacter pseudethanolicus (strain ATCC 33223 / 39E) (Clostridium thermohydrosulfuricum).